Consider the following 122-residue polypeptide: Large ribosomal subunit protein uL14 (122 aa).

It belongs to the universal ribosomal protein uL14 family. In terms of assembly, part of the 50S ribosomal subunit. Forms a cluster with proteins L3 and L19. In the 70S ribosome, L14 and L19 interact and together make contacts with the 16S rRNA in bridges B5 and B8.

Functionally, binds to 23S rRNA. Forms part of two intersubunit bridges in the 70S ribosome. This is Large ribosomal subunit protein uL14 from Polaromonas naphthalenivorans (strain CJ2).